The primary structure comprises 186 residues: Elongation factor P (186 aa).

It belongs to the elongation factor P family.

The protein localises to the cytoplasm. It participates in protein biosynthesis; polypeptide chain elongation. In terms of biological role, involved in peptide bond synthesis. Stimulates efficient translation and peptide-bond synthesis on native or reconstituted 70S ribosomes in vitro. Probably functions indirectly by altering the affinity of the ribosome for aminoacyl-tRNA, thus increasing their reactivity as acceptors for peptidyl transferase. The protein is Elongation factor P of Streptococcus gordonii (strain Challis / ATCC 35105 / BCRC 15272 / CH1 / DL1 / V288).